We begin with the raw amino-acid sequence, 181 residues long: Protein Syd (181 aa).

This sequence belongs to the Syd family.

The protein resides in the cell inner membrane. Interacts with the SecY protein in vivo. May bind preferentially to an uncomplexed state of SecY, thus functioning either as a chelating agent for excess SecY in the cell or as a regulatory factor that negatively controls the translocase function. The sequence is that of Protein Syd from Enterobacter sp. (strain 638).